The chain runs to 348 residues: Elongation factor Ts (348 aa).

The segment at 80–83 (TDFV) is involved in Mg(2+) ion dislocation from EF-Tu.

Belongs to the EF-Ts family.

It localises to the cytoplasm. Functionally, associates with the EF-Tu.GDP complex and induces the exchange of GDP to GTP. It remains bound to the aminoacyl-tRNA.EF-Tu.GTP complex up to the GTP hydrolysis stage on the ribosome. This is Elongation factor Ts from Streptococcus mutans serotype c (strain ATCC 700610 / UA159).